We begin with the raw amino-acid sequence, 823 residues long: Tax1-binding protein 1 homolog B (823 aa).

Residues 149 to 487 (VTTKASYLEQ…QKQVVKFNEQ (339 aa)) adopt a coiled-coil conformation. 2 disordered regions span residues 342–377 (HRQL…QQAN) and 486–519 (EQQG…STSD). Positions 356-368 (KALREQLRQKEEQ) are enriched in basic and acidic residues. Over residues 498–518 (AAAGPLSASPEASAPGSPSTS) the composition is skewed to low complexity. The stretch at 548–638 (QMLNEERERC…NREEEQKDSN (91 aa)) forms a coiled coil. Residues 650-746 (MPYAQDDPSP…EPAAPEPAEF (97 aa)) are disordered. The span at 723–739 (LEEPEEPQSTQNDDEPA) shows a compositional bias: acidic residues. 2 UBZ1-type zinc fingers span residues 762–788 (QKRC…VESH) and 789–815 (WKIC…VLTH). Residues cysteine 765, cysteine 768, histidine 784, histidine 788, cysteine 792, cysteine 795, histidine 811, and histidine 815 each coordinate Zn(2+).

As to expression, expressed at relatively high levels in both proximal and distal regions of the fin bud during pectoral fin development.

Functionally, may have anti-apoptotic activity. This Danio rerio (Zebrafish) protein is Tax1-binding protein 1 homolog B (tax1bp1b).